We begin with the raw amino-acid sequence, 677 residues long: Methionine--tRNA ligase (677 aa).

The 'HIGH' region signature appears at 15-25; it reads PYANGSIHLGH. Zn(2+)-binding residues include C146, C149, C159, and C162. Residues 333–337 carry the 'KMSKS' region motif; sequence KMSKS. K336 lines the ATP pocket. Positions 575–677 constitute a tRNA-binding domain; sequence DFAKVDLRVA…DGAKPGQQVK (103 aa).

This sequence belongs to the class-I aminoacyl-tRNA synthetase family. MetG type 1 subfamily. Homodimer. The cofactor is Zn(2+).

It is found in the cytoplasm. The enzyme catalyses tRNA(Met) + L-methionine + ATP = L-methionyl-tRNA(Met) + AMP + diphosphate. Functionally, is required not only for elongation of protein synthesis but also for the initiation of all mRNA translation through initiator tRNA(fMet) aminoacylation. The chain is Methionine--tRNA ligase from Salmonella schwarzengrund (strain CVM19633).